The primary structure comprises 351 residues: Photosystem II D2 protein (351 aa).

A helical transmembrane segment spans residues 39–59 (TAYLAIGGWLTGTTFVTSWYT). His116 lines the chlorophyll a pocket. The chain crosses the membrane as a helical span at residues 123–139 (GFMLRQFEIARLVGIRP). Pheophytin a-binding residues include Gln128 and Asn141. The chain crosses the membrane as a helical span at residues 151–164 (VFVSVFLMYPLGQS). His196 lines the chlorophyll a pocket. Residues 206–226 (GALLCAIHGATVENTLFEDGE) form a helical membrane-spanning segment. The a plastoquinone site is built by His213 and Phe260. His213 serves as a coordination point for Fe cation. Fe cation is bound at residue His267. Residues 277–293 (GLWTSSIGIIGLALNLR) traverse the membrane as a helical segment.

Belongs to the reaction center PufL/M/PsbA/D family. In terms of assembly, PSII is composed of 1 copy each of membrane proteins PsbA, PsbB, PsbC, PsbD, PsbE, PsbF, PsbH, PsbI, PsbJ, PsbK, PsbL, PsbM, PsbT, PsbX, PsbY, PsbZ, Psb30/Ycf12, peripheral proteins PsbO, CyanoQ (PsbQ), PsbU, PsbV and a large number of cofactors. It forms dimeric complexes. The cofactor is The D1/D2 heterodimer binds P680, chlorophylls that are the primary electron donor of PSII, and subsequent electron acceptors. It shares a non-heme iron and each subunit binds pheophytin, quinone, additional chlorophylls, carotenoids and lipids. There is also a Cl(-1) ion associated with D1 and D2, which is required for oxygen evolution. The PSII complex binds additional chlorophylls, carotenoids and specific lipids..

The protein resides in the cellular thylakoid membrane. It carries out the reaction 2 a plastoquinone + 4 hnu + 2 H2O = 2 a plastoquinol + O2. Functionally, photosystem II (PSII) is a light-driven water:plastoquinone oxidoreductase that uses light energy to abstract electrons from H(2)O, generating O(2) and a proton gradient subsequently used for ATP formation. It consists of a core antenna complex that captures photons, and an electron transfer chain that converts photonic excitation into a charge separation. The D1/D2 (PsbA/PsbD) reaction center heterodimer binds P680, the primary electron donor of PSII as well as several subsequent electron acceptors. D2 is needed for assembly of a stable PSII complex. This is Photosystem II D2 protein from Synechococcus sp. (strain WH7803).